The sequence spans 134 residues: Probable thionin-2.4 (134 aa).

Positions 1 to 24 are cleaved as a signal peptide; it reads MEGKTLIVSVLIMSLFMAQNQVDA. Cystine bridges form between C27/C64, C28/C56, and C40/C50. Positions 71-134 are cleaved as a propeptide — acidic domain; it reads DILENTGDAV…KGSMNAVENA (64 aa).

The protein belongs to the plant thionin (TC 1.C.44) family.

It is found in the secreted. Thionins are small plant proteins which are toxic to animal cells. They seem to exert their toxic effect at the level of the cell membrane. Their precise function is not known. The polypeptide is Probable thionin-2.4 (Arabidopsis thaliana (Mouse-ear cress)).